Consider the following 1190-residue polypeptide: ATPase histone chaperone abo1 (1190 aa).

Basic and acidic residues predominate over residues methionine 1–serine 11. 2 disordered regions span residues methionine 1–histidine 185 and tyrosine 204–aspartate 253. Composition is skewed to acidic residues over residues glutamine 52 to glutamate 62 and serine 82 to aspartate 106. Residues valine 112–arginine 131 show a composition bias toward basic residues. Over residues glutamate 141–serine 152 the composition is skewed to basic and acidic residues. Residue proline 309–threonine 314 coordinates ATP. In terms of domain architecture, Bromo spans arginine 794 to methionine 922.

This sequence belongs to the AAA ATPase family. Homohexamer. Interacts with the FACT complex subunits spt16 and pob3. Interacts with histone H3-H4 (via N-terminus).

Its subcellular location is the nucleus. It is found in the chromosome. The enzyme catalyses ATP + H2O = ADP + phosphate + H(+). In terms of biological role, ATPase histone chaperone which facilitates loading of histone H3-H4 onto DNA in an ATP-dependent manner. Plays a genome-wide role in nucleosome organization and establishment of chromatin. Also plays a role in heterochromatin assembly by stabilizing recruitment of the histone methyltransferase clr4 to methylated histone H3, to promote the transition from H3K9me2 to H3K9me3. The chain is ATPase histone chaperone abo1 from Schizosaccharomyces pombe (strain 972 / ATCC 24843) (Fission yeast).